We begin with the raw amino-acid sequence, 394 residues long: 5-azacytidine-induced protein 2 (394 aa).

The interval 1–197 (MDALVEDDIC…IELRKAKQTD (197 aa)) is homodimerization. Coiled coils occupy residues 40-76 (ALVTAYEDIKKRLKDSEKENSLLKKRIRFLEEKLIAR) and 102-196 (DRDN…AKQT). The segment at 216–257 (SDNMQHAYWELKREMSNLHLVTQVQAELLRKLKTSTAIKKAC) is interaction with TBK1 and IKBKE. Phosphoserine occurs at positions 318 and 355. The tract at residues 355-379 (SPPKSSETAFGETKSKTLPLPNLPP) is disordered.

As to quaternary structure, homodimer. Interacts with IKBKE, TBK1 and TICAM1. Interacts with TAX1BP1. Interacts with CALCOCO2. Ubiquitinated via 'Lys-48'-linked polyubiquitination by TRIM38, leading to its degradation.

Its subcellular location is the cytoplasm. In terms of biological role, adapter protein which binds TBK1 and IKBKE playing a role in antiviral innate immunity. Activates serine/threonine-protein kinase TBK1 and facilitates its oligomerization. Enhances the phosphorylation of NF-kappa-B p65 subunit RELA by TBK1. Promotes TBK1-induced as well as TNF-alpha or PMA-induced activation of NF-kappa-B. Participates in IFNB promoter activation via TICAM1. This chain is 5-azacytidine-induced protein 2 (AZI2), found in Macaca fascicularis (Crab-eating macaque).